The primary structure comprises 227 residues: 2-C-methyl-D-erythritol 4-phosphate cytidylyltransferase (227 aa).

Belongs to the IspD/TarI cytidylyltransferase family. IspD subfamily.

It catalyses the reaction 2-C-methyl-D-erythritol 4-phosphate + CTP + H(+) = 4-CDP-2-C-methyl-D-erythritol + diphosphate. The protein operates within isoprenoid biosynthesis; isopentenyl diphosphate biosynthesis via DXP pathway; isopentenyl diphosphate from 1-deoxy-D-xylulose 5-phosphate: step 2/6. Its function is as follows. Catalyzes the formation of 4-diphosphocytidyl-2-C-methyl-D-erythritol from CTP and 2-C-methyl-D-erythritol 4-phosphate (MEP). This Caldanaerobacter subterraneus subsp. tengcongensis (strain DSM 15242 / JCM 11007 / NBRC 100824 / MB4) (Thermoanaerobacter tengcongensis) protein is 2-C-methyl-D-erythritol 4-phosphate cytidylyltransferase.